We begin with the raw amino-acid sequence, 120 residues long: Large ribosomal subunit protein uL18 (120 aa).

Belongs to the universal ribosomal protein uL18 family. In terms of assembly, part of the 50S ribosomal subunit; part of the 5S rRNA/L5/L18/L25 subcomplex. Contacts the 5S and 23S rRNAs.

In terms of biological role, this is one of the proteins that bind and probably mediate the attachment of the 5S RNA into the large ribosomal subunit, where it forms part of the central protuberance. This chain is Large ribosomal subunit protein uL18, found in Rhodopseudomonas palustris (strain BisB5).